A 93-amino-acid chain; its full sequence is Small ribosomal subunit protein uS19 (93 aa).

This sequence belongs to the universal ribosomal protein uS19 family.

Protein S19 forms a complex with S13 that binds strongly to the 16S ribosomal RNA. The polypeptide is Small ribosomal subunit protein uS19 (Blochmanniella floridana).